The chain runs to 249 residues: MDNLNVFANEDNQVNDVKPPPPPPRVCARCDSDNTKFCYYNNYCEFQPRYFCKNCRRYWTHGGALRNIPIGGSSRAKRARVNQPSVARMVSVETQRGNNQPFSNVQENVHLVGSFGASSSSSVGAVGNLFGSLYDIHGGMVTNLHPTRTVRPNHRLAFHDGSFEQDYYDVGSDNLLVNQQVGGYGYHMNPVDQFKWNQSFNNTMNMNYNNDSTSGSSRGSDMNVNHDNKKIRYRNSVIMHPCHLEKDGP.

The Dof-type zinc-finger motif lies at 25–79 (RVCARCDSDNTKFCYYNNYCEFQPRYFCKNCRRYWTHGGALRNIPIGGSSRAKRA). Positions 27, 30, 52, and 55 each coordinate Zn(2+).

It is found in the nucleus. Functionally, transcription factor that binds specifically to a 5'-AA[AG]G-3' consensus core sequence. The sequence is that of Dof zinc finger protein DOF4.5 (DOF4.5) from Arabidopsis thaliana (Mouse-ear cress).